A 335-amino-acid polypeptide reads, in one-letter code: Cytoskeleton protein RodZ (335 aa).

At 1–111 the chain is on the cytoplasmic side; it reads MNTEATHDQN…LGKRRKKRDG (111 aa). One can recognise an HTH cro/C1-type domain in the interval 19-71; it reads LRNAREQLGLSQQAVAERLCLKVSTVRDIEEDKAPADLASTFLRGYIRSYARL. A DNA-binding region (H-T-H motif) is located at residues 30–49; sequence QQAVAERLCLKVSTVRDIEE. The chain crosses the membrane as a helical; Signal-anchor for type II membrane protein span at residues 112–132; that stretch reads WLMTFTWLVLFVVIGLSGAWW. Over 133–335 the chain is Periplasmic; it reads WQDHKAQQEE…TLNAEQSPAQ (203 aa). The segment covering 148-164 has biased composition (polar residues); sequence DQSSAELNNNQSQSVPL. The segment at 148 to 239 is disordered; that stretch reads DQSSAELNNN…PDGAAPLPTD (92 aa). Low complexity-rich tracts occupy residues 165 to 205 and 217 to 239; these read DTST…DPQQ and DTAA…LPTD.

This sequence belongs to the RodZ family.

The protein resides in the cell inner membrane. Cytoskeletal protein that is involved in cell-shape control through regulation of the length of the long axis. The chain is Cytoskeleton protein RodZ from Escherichia coli O6:K15:H31 (strain 536 / UPEC).